A 475-amino-acid chain; its full sequence is Ribulose bisphosphate carboxylase large chain (475 aa).

The propeptide occupies 1 to 2 (MS). Pro-3 carries the post-translational modification N-acetylproline. Residue Lys-14 is modified to N6,N6,N6-trimethyllysine. Substrate contacts are provided by Asn-123 and Thr-173. Lys-175 (proton acceptor) is an active-site residue. Lys-177 contacts substrate. Residues Lys-201, Asp-203, and Glu-204 each coordinate Mg(2+). Lys-201 is modified (N6-carboxylysine). The active-site Proton acceptor is His-294. Substrate contacts are provided by Arg-295, His-327, and Ser-379.

This sequence belongs to the RuBisCO large chain family. Type I subfamily. In terms of assembly, heterohexadecamer of 8 large chains and 8 small chains; disulfide-linked. The disulfide link is formed within the large subunit homodimers. Mg(2+) is required as a cofactor. The disulfide bond which can form in the large chain dimeric partners within the hexadecamer appears to be associated with oxidative stress and protein turnover.

It is found in the plastid. It localises to the chloroplast. The catalysed reaction is 2 (2R)-3-phosphoglycerate + 2 H(+) = D-ribulose 1,5-bisphosphate + CO2 + H2O. The enzyme catalyses D-ribulose 1,5-bisphosphate + O2 = 2-phosphoglycolate + (2R)-3-phosphoglycerate + 2 H(+). RuBisCO catalyzes two reactions: the carboxylation of D-ribulose 1,5-bisphosphate, the primary event in carbon dioxide fixation, as well as the oxidative fragmentation of the pentose substrate in the photorespiration process. Both reactions occur simultaneously and in competition at the same active site. This is Ribulose bisphosphate carboxylase large chain from Pelargonium hortorum (Common geranium).